We begin with the raw amino-acid sequence, 360 residues long: RNA demethylase ALKBH5 (360 aa).

The disordered stretch occupies residues 1-53 (MSATYTDLREKLQSLNRDSPKEVRKRKQPASDTEEEDEAGSEPEAEEEEARKV). Over residues 7 to 22 (DLREKLQSLNRDSPKE) the composition is skewed to basic and acidic residues. Positions 32–48 (DTEEEDEAGSEPEAEEE) are enriched in acidic residues. Tyr107 is an active-site residue. Residues Asn161, Tyr163, His172, His234, and Arg245 each contribute to the 2-oxoglutarate site. Cys198 and Cys235 are oxidised to a cystine. A disordered region spans residues 261-360 (EMKSLSSSYQ…PVRKVKMRRH (100 aa)). Residues 264-280 (SLSSSYQPERLQGSNRQ) are compositionally biased toward polar residues. Residues 281-290 (HILKPKRSHR) show a composition bias toward basic residues. Basic and acidic residues-rich tracts occupy residues 291–312 (KADPDAAHRPRILEMDKEENRR) and 330–340 (YWRRSHDHVDT).

This sequence belongs to the alkB family. In terms of assembly, monomer. It depends on Fe(2+) as a cofactor.

The protein localises to the nucleus speckle. It carries out the reaction an N(6)-methyladenosine in mRNA + 2-oxoglutarate + O2 = an adenosine in mRNA + formaldehyde + succinate + CO2. Its function is as follows. Dioxygenase that specifically demethylates N(6)-methyladenosine (m6A) RNA, the most prevalent internal modification of messenger RNA (mRNA) in higher eukaryotes. Demethylates RNA by oxidative demethylation, which requires molecular oxygen, alpha-ketoglutarate and iron. Demethylation of m6A mRNA affects mRNA processing, translation and export. This Xenopus laevis (African clawed frog) protein is RNA demethylase ALKBH5 (alkbh5).